A 300-amino-acid chain; its full sequence is Lysenin-related protein 3 (300 aa).

The segment at 12-35 (EEIEVDVVAVWKEGYVYENRGDTS) is N-terminal cap domain. The interval 36–109 (VEQKITMTKG…SQVIEHTVTI (74 aa)) is beta-hairpin domain. The segment at 110–158 (PPTSKFTRWKLNADVGGTDIEYMYLIDEVTPISVTQTIPQVIRSRAKIL) is N-terminal cap domain. The interval 159–299 (VGRQIHLGTT…EDKWILEVVN (141 aa)) is C-terminal receptor-binding domain. An N-(acyl)-sphingosylphosphocholine contacts are provided by K187, S229, Y235, and Y284. Residues C274 and C285 are joined by a disulfide bond.

The protein belongs to the lysenin family. In terms of assembly, binds to sphingomyelin as a monomer by using its C-terminal domain. Forms a nonamer when sphingomyelin/LRP-3 ratio is lower than ca 500. Oligomerization, but not binding, is influenced by the fluidity of sphingomyelin. In terms of tissue distribution, expressed by coelomocytes.

It localises to the secreted. The protein resides in the target cell membrane. Its function is as follows. Pore-forming toxin that specifically binds sphingomyelin in the plasma membrane of various cells. Has antibacterial and hemolytic activity. This is Lysenin-related protein 3 from Eisenia fetida (Red wiggler worm).